The primary structure comprises 449 residues: Glutamyl-tRNA reductase (449 aa).

Substrate-binding positions include 58–61 (TCNR), S121, 126–128 (ETQ), and Q132. C59 serves as the catalytic Nucleophile. 203–208 (GLGEMA) provides a ligand contact to NADP(+).

This sequence belongs to the glutamyl-tRNA reductase family. In terms of assembly, homodimer.

The enzyme catalyses (S)-4-amino-5-oxopentanoate + tRNA(Glu) + NADP(+) = L-glutamyl-tRNA(Glu) + NADPH + H(+). It participates in porphyrin-containing compound metabolism; protoporphyrin-IX biosynthesis; 5-aminolevulinate from L-glutamyl-tRNA(Glu): step 1/2. In terms of biological role, catalyzes the NADPH-dependent reduction of glutamyl-tRNA(Glu) to glutamate 1-semialdehyde (GSA). In Helicobacter pylori (strain Shi470), this protein is Glutamyl-tRNA reductase.